We begin with the raw amino-acid sequence, 356 residues long: S-adenosylmethionine:tRNA ribosyltransferase-isomerase (356 aa).

This sequence belongs to the QueA family. Monomer.

Its subcellular location is the cytoplasm. It carries out the reaction 7-aminomethyl-7-carbaguanosine(34) in tRNA + S-adenosyl-L-methionine = epoxyqueuosine(34) in tRNA + adenine + L-methionine + 2 H(+). Its pathway is tRNA modification; tRNA-queuosine biosynthesis. Its function is as follows. Transfers and isomerizes the ribose moiety from AdoMet to the 7-aminomethyl group of 7-deazaguanine (preQ1-tRNA) to give epoxyqueuosine (oQ-tRNA). This chain is S-adenosylmethionine:tRNA ribosyltransferase-isomerase, found in Escherichia coli (strain UTI89 / UPEC).